The chain runs to 113 residues: Biotrophy-associated secreted protein 3 (113 aa).

A signal peptide spans 1-20 (MQFSTVSFAIFAILPAMVAA).

The protein resides in the secreted. Functionally, secreted effector involved in biotrophic colonization of plant cells. This chain is Biotrophy-associated secreted protein 3, found in Pyricularia oryzae (strain 70-15 / ATCC MYA-4617 / FGSC 8958) (Rice blast fungus).